Reading from the N-terminus, the 537-residue chain is Actin-histidine N-methyltransferase (537 aa).

Over residues Met-1–Lys-12 the composition is skewed to basic residues. The disordered stretch occupies residues Met-1–Lys-50. S-adenosyl-L-methionine is bound by residues Arg-114, Tyr-143–Leu-145, Arg-299, Asp-325–His-329, and Asn-375–Phe-377. Positions Glu-133–Gly-364 constitute an SET domain.

It belongs to the class V-like SAM-binding methyltransferase superfamily. SETD3 actin-histidine methyltransferase family.

It localises to the cytoplasm. It is found in the nucleus. The catalysed reaction is L-histidyl-[protein] + S-adenosyl-L-methionine = N(tele)-methyl-L-histidyl-[protein] + S-adenosyl-L-homocysteine + H(+). Functionally, protein-histidine N-methyltransferase that specifically mediates 3-methylhistidine (tele-methylhistidine) methylation of actin at 'His-74'. This is Actin-histidine N-methyltransferase from Drosophila melanogaster (Fruit fly).